The chain runs to 157 residues: Probable calcium-binding protein CML23 (157 aa).

EF-hand domains lie at 11 to 46 (GSME…LSPN), 47 to 82 (ASQE…SDQS), 86 to 121 (SAIR…LGEK), and 122 to 157 (CSIQ…NGSA). Ca(2+)-binding residues include Asp24, Asn26, Asp28, Lys30, Glu35, Asp60, Asp62, Asn64, Glu71, Asp99, Asp101, Asn103, Arg105, Glu110, Asp135, Asp137, Asp139, Cys141, and Glu146.

Functionally, potential calcium sensor. This chain is Probable calcium-binding protein CML23 (CML23), found in Arabidopsis thaliana (Mouse-ear cress).